We begin with the raw amino-acid sequence, 100 residues long: Small ribosomal subunit protein uS14c (100 aa).

It belongs to the universal ribosomal protein uS14 family. In terms of assembly, part of the 30S ribosomal subunit.

The protein localises to the plastid. The protein resides in the chloroplast. Its function is as follows. Binds 16S rRNA, required for the assembly of 30S particles. This chain is Small ribosomal subunit protein uS14c, found in Chlamydomonas reinhardtii (Chlamydomonas smithii).